Here is a 385-residue protein sequence, read N- to C-terminus: ATP phosphoribosyltransferase regulatory subunit (385 aa).

Belongs to the class-II aminoacyl-tRNA synthetase family. HisZ subfamily. As to quaternary structure, heteromultimer composed of HisG and HisZ subunits.

Its subcellular location is the cytoplasm. It participates in amino-acid biosynthesis; L-histidine biosynthesis; L-histidine from 5-phospho-alpha-D-ribose 1-diphosphate: step 1/9. Functionally, required for the first step of histidine biosynthesis. May allow the feedback regulation of ATP phosphoribosyltransferase activity by histidine. In Bordetella parapertussis (strain 12822 / ATCC BAA-587 / NCTC 13253), this protein is ATP phosphoribosyltransferase regulatory subunit.